A 1247-amino-acid polypeptide reads, in one-letter code: uncharacterized protein (1247 aa).

Disordered regions lie at residues 25 to 141 (KYNN…HSPP), 169 to 431 (AANN…QQPQ), 472 to 667 (QQQP…PSSS), 738 to 770 (NSNS…SEPI), 807 to 857 (YSNR…QNIE), 869 to 1087 (GKNF…NNNN), 1099 to 1122 (STLN…ESQQ), and 1139 to 1162 (QQQQ…KGDG). Positions 26–125 (YNNSNNYNNN…SNNSINSNSY (100 aa)) are enriched in low complexity. Residues 126–139 (KVNTPTQNGKSSHS) show a composition bias toward polar residues. Low complexity-rich tracts occupy residues 169–178 (AANNGSSNSS), 185–223 (SNSN…NYNS), and 230–341 (NNNN…YSNS). The span at 342–356 (KYNQQKSYNNAPHQL) shows a compositional bias: polar residues. 4 stretches are compositionally biased toward low complexity: residues 363-375 (NSYY…NNGN), 385-394 (GSGNSSNSNG), 409-431 (QSQS…QQPQ), and 472-484 (QQQP…QQQQ). Residues 511-522 (GLNNSLNGQTDL) are compositionally biased toward polar residues. Composition is skewed to low complexity over residues 523 to 544 (NNSN…TNNN), 553 to 628 (YNYN…VGSN), 655 to 667 (TPSS…PSSS), 738 to 759 (NSNS…NNNH), 807 to 855 (YSNR…DSQN), and 871 to 928 (NFNN…ENNN). Residues 929 to 942 (GDVFSNGFSTWTPK) show a composition bias toward polar residues. Low complexity predominate over residues 943–983 (SGSNSLNNSQNNLSNGQNSSNNSQNNLNNSQNSLNSSGNHH). Residues 984–995 (SNYHGHNNHHHY) show a composition bias toward basic residues. Low complexity predominate over residues 996 to 1021 (NNNNNNNNNNNNNNNNNNNNNNNGNG). The span at 1026–1044 (YYNNKYQQKSPQHQSSNSV) shows a compositional bias: polar residues. A compositionally biased stretch (pro residues) spans 1047–1060 (IPPPGFSTIAPPPG). Over residues 1064-1087 (NNNNNNNNNNNNNNNKNNNSNNNN) the composition is skewed to low complexity. Residues 1099 to 1108 (STLNNSQDDS) show a composition bias toward polar residues. A compositionally biased stretch (low complexity) spans 1110 to 1122 (QQEQEQQEQESQQ).

This is an uncharacterized protein from Dictyostelium discoideum (Social amoeba).